The chain runs to 88 residues: Putative septation protein SpoVG (88 aa).

This sequence belongs to the SpoVG family.

Could be involved in septation. The sequence is that of Putative septation protein SpoVG from Caldicellulosiruptor saccharolyticus (strain ATCC 43494 / DSM 8903 / Tp8T 6331).